The sequence spans 152 residues: UPF0178 protein Plav_1521 (152 aa).

Positions 114-152 are disordered; sequence LRETGQSKGGGPAFSKEDRSRFLRSLEDTVQAIRRRPPP. Basic and acidic residues predominate over residues 128 to 140; sequence SKEDRSRFLRSLE.

This sequence belongs to the UPF0178 family.

The protein is UPF0178 protein Plav_1521 of Parvibaculum lavamentivorans (strain DS-1 / DSM 13023 / NCIMB 13966).